Reading from the N-terminus, the 574-residue chain is MEGQAAETNHRAETVVRAELCLSAEQGPETTAYSQKRCLFLPMEVWQEAQQLLALAAPAFLSQLMIFLISIVSSIFCGHLGKVELDAVSLAITIINITGVAVGTGLAGACDTLISQTFGGSNLKLVGIILQRGILILLLFCFPCWALLINTESILLLFRQDPEVSKLTQIYVLIFLPALPAAFLYQLLAKYLQNQGIIYPQVLTGFIANIFNALFNYILLYVLGLGVMGSACANTVSQFIQMILLFLYIVWRRLYADTWGGWSQACFEEWGAFIRLAVASMLMLCIEWWAFEISMFLAGVLGMVDLAAQAIIYQVAIVVYLIPLGLCIAGSIRVGHGLGAGNTEQAKRSALVVLCMTELCALLSGILLATLKDVVAYIFTSDPNIVALVSYVLPVYSACLLFDACVAACGGILRGSGKLKVGAISHTVGYYVIGLPLGISLMFAAKLGIIGFWFGILACGIAQSIFLIIFVFKIDWKRASEEAQTRASERVEIPQKIDNKPSVYQEGCPTEQGDVDPGNVESIEFSQSSTSSEGTSPTPAGAAQHTRTLILTRGLALGCAVGTLIIGIVIRLSV.

At 1 to 51 the chain is on the cytoplasmic side; that stretch reads MEGQAAETNHRAETVVRAELCLSAEQGPETTAYSQKRCLFLPMEVWQEAQQ. The chain crosses the membrane as a helical span at residues 52 to 72; sequence LLALAAPAFLSQLMIFLISIV. Residues 73–86 lie on the Extracellular side of the membrane; sequence SSIFCGHLGKVELD. The helical transmembrane segment at 87–107 threads the bilayer; the sequence is AVSLAITIINITGVAVGTGLA. The Cytoplasmic segment spans residues 108–133; sequence GACDTLISQTFGGSNLKLVGIILQRG. Residues 134–154 traverse the membrane as a helical segment; that stretch reads ILILLLFCFPCWALLINTESI. The Extracellular segment spans residues 155–168; sequence LLLFRQDPEVSKLT. Residues 169–189 form a helical membrane-spanning segment; it reads QIYVLIFLPALPAAFLYQLLA. Over 190–204 the chain is Cytoplasmic; it reads KYLQNQGIIYPQVLT. A helical transmembrane segment spans residues 205–225; the sequence is GFIANIFNALFNYILLYVLGL. Topologically, residues 226 to 230 are extracellular; sequence GVMGS. Residues 231–251 traverse the membrane as a helical segment; sequence ACANTVSQFIQMILLFLYIVW. At 252 to 271 the chain is on the cytoplasmic side; it reads RRLYADTWGGWSQACFEEWG. A helical membrane pass occupies residues 272–291; it reads AFIRLAVASMLMLCIEWWAF. The Extracellular portion of the chain corresponds to 292–309; it reads EISMFLAGVLGMVDLAAQ. Residues 310–330 traverse the membrane as a helical segment; that stretch reads AIIYQVAIVVYLIPLGLCIAG. The Cytoplasmic segment spans residues 331–350; sequence SIRVGHGLGAGNTEQAKRSA. The helical transmembrane segment at 351-371 threads the bilayer; the sequence is LVVLCMTELCALLSGILLATL. At 372–384 the chain is on the extracellular side; that stretch reads KDVVAYIFTSDPN. A helical membrane pass occupies residues 385–405; sequence IVALVSYVLPVYSACLLFDAC. Residues 406–430 lie on the Cytoplasmic side of the membrane; it reads VAACGGILRGSGKLKVGAISHTVGY. The chain crosses the membrane as a helical span at residues 431-451; that stretch reads YVIGLPLGISLMFAAKLGIIG. At 452–453 the chain is on the extracellular side; the sequence is FW. A helical membrane pass occupies residues 454–472; sequence FGILACGIAQSIFLIIFVF. At 473–549 the chain is on the cytoplasmic side; the sequence is KIDWKRASEE…AGAAQHTRTL (77 aa). Positions 500–541 are disordered; sequence KPSVYQEGCPTEQGDVDPGNVESIEFSQSSTSSEGTSPTPAG. Residues 521–538 show a composition bias toward low complexity; it reads ESIEFSQSSTSSEGTSPT. A helical membrane pass occupies residues 550–570; that stretch reads ILTRGLALGCAVGTLIIGIVI. Residues 571–574 lie on the Extracellular side of the membrane; sequence RLSV.

Belongs to the multi antimicrobial extrusion (MATE) (TC 2.A.66.1) family.

The protein localises to the cell membrane. It localises to the apical cell membrane. The enzyme catalyses thiamine(out) + H(+)(in) = thiamine(in) + H(+)(out). It carries out the reaction estrone 3-sulfate(in) + H(+)(out) = estrone 3-sulfate(out) + H(+)(in). It catalyses the reaction creatinine(in) + H(+)(out) = creatinine(out) + H(+)(in). The catalysed reaction is agmatine(in) + H(+)(out) = agmatine(out) + H(+)(in). Multidrug efflux pump that functions as a H(+)/organic cation antiporter. Mediates the secretion of cationic compounds including drugs, toxins and endogenous metabolites. Plays a role physiological role in the excretion of drugs, toxins and endogenous metabolites through the kidney and liver, into urine and bile respectively. This is Multidrug and toxin extrusion protein 1 (slc47a1) from Xenopus tropicalis (Western clawed frog).